Consider the following 102-residue polypeptide: Large ribosomal subunit protein bL21 (102 aa).

The protein belongs to the bacterial ribosomal protein bL21 family. Part of the 50S ribosomal subunit. Contacts protein L20.

Its function is as follows. This protein binds to 23S rRNA in the presence of protein L20. The sequence is that of Large ribosomal subunit protein bL21 from Nocardioides sp. (strain ATCC BAA-499 / JS614).